The following is a 410-amino-acid chain: Demethyl-4-deoxygadusol synthase (410 aa).

Residues 56 to 58, 87 to 90, 119 to 123, 143 to 144, K156, K165, and 183 to 186 each bind NAD(+); these read DAN, EPDK, GLITD, TT, and LLRT. Zn(2+) is bound by residues E198, H271, and H287.

It belongs to the sugar phosphate cyclases superfamily. DDGS family. Homodimer. It depends on NAD(+) as a cofactor. The cofactor is Co(2+). Requires Zn(2+) as cofactor.

The catalysed reaction is D-sedoheptulose 7-phosphate = (R)-demethyl-4-deoxygadusol + phosphate + H2O + H(+). In terms of biological role, catalyzes the conversion of sedoheptulose 7-phosphate to demethyl-4-deoxygadusol (DDG). Involved in the synthesis of the mycosporine-like amino acid shinorine, a natural sunscreen compound that protects the cell against UV radiation. The sequence is that of Demethyl-4-deoxygadusol synthase from Trichormus variabilis (strain ATCC 29413 / PCC 7937) (Anabaena variabilis).